We begin with the raw amino-acid sequence, 130 residues long: Small ribosomal subunit protein uS8 (130 aa).

This sequence belongs to the universal ribosomal protein uS8 family. Part of the 30S ribosomal subunit. Contacts proteins S5 and S12.

In terms of biological role, one of the primary rRNA binding proteins, it binds directly to 16S rRNA central domain where it helps coordinate assembly of the platform of the 30S subunit. The protein is Small ribosomal subunit protein uS8 of Teredinibacter turnerae (strain ATCC 39867 / T7901).